The following is a 233-amino-acid chain: Tapetum-specific methyltransferase 1 (233 aa).

Substrate is bound at residue K8. S-adenosyl-L-methionine is bound by residues V52, E74, 76–77, S82, D100, and A129; that span reads GV. D150 contacts substrate. D150 contacts a divalent metal cation. Position 152 (D152) interacts with S-adenosyl-L-methionine. The a divalent metal cation site is built by D176 and N177.

It belongs to the class I-like SAM-binding methyltransferase superfamily. Cation-dependent O-methyltransferase family. CCoAMT subfamily. A divalent metal cation serves as cofactor. In terms of tissue distribution, expressed in inflorescences and flower buds. Not detected in roots, leaves or stems. Located exclusively in the tapetum of developing stamen.

The protein operates within aromatic compound metabolism; phenylpropanoid biosynthesis. Functionally, methyltransferase involved in phenylpropanoid polyamine conjugate biosynthesis. In vivo, methylates only one of the 5-hydroxyferuloyl moieties of N1,N5,N10-tri-(hydroxyferuloyl)-spermidine, while is able in vitro to convert all three 5-hydroxyferuloyl residues to the corresponding sinapoyl moieties and to methylate caffeoyl CoA and tricaffeoyl spermidine. In Arabidopsis thaliana (Mouse-ear cress), this protein is Tapetum-specific methyltransferase 1 (TSM1).